The sequence spans 240 residues: Orotidine 5'-phosphate decarboxylase (240 aa).

Residues D15, K37, 64 to 73 (DLKYHDIPNT), T125, R186, Q195, G215, and R216 contribute to the substrate site. The active-site Proton donor is the K66.

The protein belongs to the OMP decarboxylase family. Type 1 subfamily. In terms of assembly, homodimer.

It carries out the reaction orotidine 5'-phosphate + H(+) = UMP + CO2. Its pathway is pyrimidine metabolism; UMP biosynthesis via de novo pathway; UMP from orotate: step 2/2. Functionally, catalyzes the decarboxylation of orotidine 5'-monophosphate (OMP) to uridine 5'-monophosphate (UMP). The sequence is that of Orotidine 5'-phosphate decarboxylase from Pelobacter propionicus (strain DSM 2379 / NBRC 103807 / OttBd1).